A 301-amino-acid chain; its full sequence is MAPDIQRVKAFLLDLQDRICQQLSAVDGDDFVEDAWQREGGGGGRSRVLRDGVVFEQAGVNFSHVHGDAMPASATAHRPELAGRSFEAMGVSLVVHPRNPYVPTSHANVRFFIAEKPGADPVWWFGGGFDLTPFYGFEEDAVHWHRTARDLCAPFGDDVYPRYKKWCDDYFYLKHRQEARGIGGLFFDDLNTPDFDTCFAFMQAVGDGYLNAYLPIVERRKTLPWGEREREFQLYRRGRYVEFNLVWDRGTLFGLQTGGRTESILMSMPPLVRWEYGYQPEENSPEAALYRDFLPVRDWVK.

Ser92 is a substrate binding site. Residues His96 and His106 each contribute to the a divalent metal cation site. The Proton donor role is filled by His106. Residue 108 to 110 coordinates substrate; the sequence is NVR. A divalent metal cation contacts are provided by His145 and His175. The segment at 240–275 is important for dimerization; sequence YVEFNLVWDRGTLFGLQTGGRTESILMSMPPLVRWE. Position 258-260 (258-260) interacts with substrate; sequence GGR.

It belongs to the aerobic coproporphyrinogen-III oxidase family. As to quaternary structure, homodimer. Requires a divalent metal cation as cofactor.

It localises to the cytoplasm. The enzyme catalyses coproporphyrinogen III + O2 + 2 H(+) = protoporphyrinogen IX + 2 CO2 + 2 H2O. It participates in porphyrin-containing compound metabolism; protoporphyrin-IX biosynthesis; protoporphyrinogen-IX from coproporphyrinogen-III (O2 route): step 1/1. Its function is as follows. Involved in the heme biosynthesis. Catalyzes the aerobic oxidative decarboxylation of propionate groups of rings A and B of coproporphyrinogen-III to yield the vinyl groups in protoporphyrinogen-IX. This is Oxygen-dependent coproporphyrinogen-III oxidase from Cronobacter sakazakii (strain ATCC BAA-894) (Enterobacter sakazakii).